The primary structure comprises 196 residues: Probable GTP-binding protein EngB (196 aa).

In terms of domain architecture, EngB-type G spans 22–196; sequence NLPEIALAGR…GNWIEDKISQ (175 aa). Residues 30 to 37, 57 to 61, 75 to 78, 142 to 145, and 175 to 177 contribute to the GTP site; these read GRSNVGKS, GKTQT, DVPG, TKMD, and FSS. Mg(2+)-binding residues include S37 and T59.

The protein belongs to the TRAFAC class TrmE-Era-EngA-EngB-Septin-like GTPase superfamily. EngB GTPase family. Requires Mg(2+) as cofactor.

Necessary for normal cell division and for the maintenance of normal septation. The chain is Probable GTP-binding protein EngB from Lactobacillus acidophilus (strain ATCC 700396 / NCK56 / N2 / NCFM).